The primary structure comprises 123 residues: Putative acidic leucine-rich nuclear phosphoprotein 32 family member C (123 aa).

4 LRR repeats span residues 43 to 64 (ELEF…PKLN), 65 to 87 (KLKK…AEKC), 89 to 110 (NLKH…ELLK), and 114 to 123 (NLKSLDLFNC).

Belongs to the ANP32 family.

In Mus musculus (Mouse), this protein is Putative acidic leucine-rich nuclear phosphoprotein 32 family member C (Anp32c).